The sequence spans 550 residues: Cytokinin dehydrogenase 10 (550 aa).

The N-terminal stretch at 1 to 26 (MMPRAQLTTFLIVTSFLSTVPYLRAP) is a signal peptide. The FAD-binding PCMH-type domain occupies 64 to 245 (VHATPNGVFR…TRARIRLEPA (182 aa)). Residues glycine 100, lysine 101, and glycine 102 each coordinate FAD. The residue at position 103 (histidine 103) is a Pros-8alpha-FAD histidine. FAD contacts are provided by serine 104, glutamine 108, aspartate 169, threonine 174, serine 180, isoleucine 184, and isoleucine 235. Asparagine 289 carries N-linked (GlcNAc...) asparagine glycosylation. FAD is bound by residues tyrosine 489, serine 524, and glutamine 527. The disordered stretch occupies residues 523–550 (LSPGQGIFPPPPPPSPPPPAAGEPITAS). A compositionally biased stretch (pro residues) spans 530-543 (FPPPPPPSPPPPAA).

This sequence belongs to the oxygen-dependent FAD-linked oxidoreductase family. Monomer. FAD serves as cofactor.

It localises to the secreted. Its subcellular location is the extracellular space. It carries out the reaction N(6)-dimethylallyladenine + A + H2O = 3-methyl-2-butenal + adenine + AH2. Catalyzes the oxidation of cytokinins, a family of N(6)-substituted adenine derivatives that are plant hormones, where the substituent is an isopentenyl group. This is Cytokinin dehydrogenase 10 (CKX10) from Oryza sativa subsp. japonica (Rice).